The sequence spans 188 residues: Interferon alpha-2 (188 aa).

The first 23 residues, 1–23 (MALTFALLVALLVLSCKSSCSVG), serve as a signal peptide directing secretion. Intrachain disulfides connect cysteine 24-cysteine 121 and cysteine 52-cysteine 161. A glycan (O-linked (GalNAc...) threonine) is linked at threonine 129.

The protein belongs to the alpha/beta interferon family. As to quaternary structure, interacts with IFNAR2.

The protein localises to the secreted. Its function is as follows. Produced by macrophages, IFN-alpha have antiviral activities. The protein is Interferon alpha-2 (IFNA2) of Homo sapiens (Human).